The following is a 92-amino-acid chain: Probable Fe(2+)-trafficking protein (92 aa).

Belongs to the Fe(2+)-trafficking protein family.

Its function is as follows. Could be a mediator in iron transactions between iron acquisition and iron-requiring processes, such as synthesis and/or repair of Fe-S clusters in biosynthetic enzymes. The protein is Probable Fe(2+)-trafficking protein of Shewanella sp. (strain W3-18-1).